A 1166-amino-acid polypeptide reads, in one-letter code: Reverse gyrase 2 (1166 aa).

The segment at 1 to 40 (MINVMYKNSCPNCGGDISGDRLLNGLPCEACLPYINGIDD) adopts an RG N-terminal-type zinc-finger fold. The Zn(2+) site is built by cysteine 10, cysteine 13, cysteine 28, and cysteine 31. ATP is bound by residues glutamine 92 and 109 to 116 (APTGLGKT). The region spanning 96 to 285 (LRRLASNQSF…ALRLLTGFEP (190 aa)) is the Helicase ATP-binding domain. The DEAD box signature appears at 190–193 (DDAD). The interval 576-1166 (FNISTGLLIV…VNPLKSEQNV (591 aa)) is topoisomerase I. A Toprim domain is found at 580-743 (TGLLIVESPT…NVYRVVYHEI (164 aa)). Glutamate 586 is a binding site for Mg(2+). Residues 662-689 (IKKCLDCNKIFSSASDKCPYCGSANLQS) form an RG C-terminal-type zinc finger. The Zn(2+) site is built by cysteine 665, cysteine 668, cysteine 679, and cysteine 682. Aspartate 712 contributes to the Mg(2+) binding site. The region spanning 759-1157 (NTNLVMSQIV…EIFSEISTLV (399 aa)) is the Topo IA-type catalytic domain. Residue tyrosine 903 is the O-(5'-phospho-DNA)-tyrosine intermediate of the active site.

This sequence in the N-terminal section; belongs to the DEAD box helicase family. DDVD subfamily. In the C-terminal section; belongs to the type IA topoisomerase family. Monomer. It depends on Zn(2+) as a cofactor. Mg(2+) serves as cofactor.

The protein localises to the cytoplasm. It catalyses the reaction ATP + H2O = ADP + phosphate + H(+). Its activity is regulated as follows. At least one of the 2 proteins is inhibited by actinomycin D. Less sensitive to NaCl than TopR1, maximal positive supercoiling is observed with 100 mM NaCl; as NaCl rises higher than 400 mM supercoiling decreases. At 600 mM NaCl relaxes but does not introduce positive supercoils into negatively supercoiled substrate. Modifies the topological state of DNA by introducing positive supercoils in an ATP-dependent process. A highly processive enzyme, it introduces a large number of positive supercoils directly in a negatively supercoiled substrate. At 75 degrees Celsius introduces more than 23 positive supercoils into pTZ18R DNA (probably 2860 bp), more than TopR1; unlike TopR1 little to no relaxation of the negatively supercoiled substrate is seen in the presence of ATP, in the absence of ATP no activity is seen. At 45 degrees Celsius the enzyme is slower and in vitro individual steps can be detected. It cleaves transiently a single DNA strand and remains covalently bound to the 5' DNA end through a tyrosine residue. May be involved in DNA damage response. May be involved in rewinding the DNA strands in the regions of the chromosome that have opened up to allow transcription or replication. Functionally, there are 2 genes for this protein in the cell. During exponential growth this is the more highly expressed isoform (about 125 molecules per cell at 80 degrees Celsius, about 117 molecules at 88 degrees Celsius); this isoform is less active at higher temperature. Grows actively at both 80 and 88 degrees Celsius; survives a long exposure at 45 degrees Celsius without DNA replication or cell division occurring. Experiments using whole cell extracts do not distinguish which isoform is present, the results are probably a mixture of the two forms. The protein is Reverse gyrase 2 of Saccharolobus solfataricus (strain ATCC 35092 / DSM 1617 / JCM 11322 / P2) (Sulfolobus solfataricus).